A 61-amino-acid chain; its full sequence is Toxin S5C1 (61 aa).

Disulfide bonds link Cys-3/Cys-22, Cys-16/Cys-39, Cys-41/Cys-53, and Cys-54/Cys-59. The Cell attachment site signature appears at 45 to 47; the sequence is RGD.

This sequence belongs to the three-finger toxin family. Short-chain subfamily. Antiplatelet toxin sub-subfamily. As to expression, expressed by the venom gland.

It localises to the secreted. Inhibits ADP-induced platelet aggregation and inhibits the binding of purified platelet fibrinogen receptor alpha-IIb/beta-3 (ITGA2B/ITGB3) to immobilized fibrinogen. This chain is Toxin S5C1, found in Dendroaspis jamesoni kaimosae (Eastern Jameson's mamba).